Here is a 544-residue protein sequence, read N- to C-terminus: Methionine--tRNA ligase 2 (544 aa).

Residues 10–20 (PYANGSLHLGH) carry the 'HIGH' region motif. Zn(2+) is bound by residues cysteine 141, cysteine 144, cysteine 153, and cysteine 156. A 'KMSKS' region motif is present at residues 329-333 (KLSTS). Residue threonine 332 coordinates ATP.

This sequence belongs to the class-I aminoacyl-tRNA synthetase family. MetG type 1 subfamily. As to quaternary structure, monomer. It depends on Zn(2+) as a cofactor.

Its subcellular location is the cytoplasm. The catalysed reaction is tRNA(Met) + L-methionine + ATP = L-methionyl-tRNA(Met) + AMP + diphosphate. Functionally, is required not only for elongation of protein synthesis but also for the initiation of all mRNA translation through initiator tRNA(fMet) aminoacylation. The polypeptide is Methionine--tRNA ligase 2 (Bacillus anthracis).